The following is a 468-amino-acid chain: Cysteine--tRNA ligase (468 aa).

Cysteine 33 is a Zn(2+) binding site. A 'HIGH' region motif is present at residues 35-45 (ATVQGLPHIGH). Zn(2+)-binding residues include cysteine 211, histidine 236, and glutamate 240. The 'KMSKS' region signature appears at 267-271 (KMSKS). Lysine 270 is an ATP binding site.

It belongs to the class-I aminoacyl-tRNA synthetase family. In terms of assembly, monomer. It depends on Zn(2+) as a cofactor.

The protein resides in the cytoplasm. The enzyme catalyses tRNA(Cys) + L-cysteine + ATP = L-cysteinyl-tRNA(Cys) + AMP + diphosphate. The protein is Cysteine--tRNA ligase of Mycobacterium avium (strain 104).